Reading from the N-terminus, the 493-residue chain is Transcript termination protein A18 (493 aa).

Residues 100 to 256 (MIELKRPLYI…NSIINIAKLS (157 aa)) enclose the Helicase ATP-binding domain. Residue 113-120 (LACGFGKT) participates in ATP binding. Residues 206-209 (DESH) carry the DESH box motif.

It belongs to the helicase family. Poxviruses subfamily. Interacts with G2. Might be part of a transcription complex composed at least of G2, A18, and H5.

Its subcellular location is the virion. Functionally, DNA helicase which seems to act as a postreplicative transcription termination factor. Involved in ATP-dependent release of nascent RNA. Forms a stable complex with single-stranded DNA, and to a lesser extent RNA. The sequence is that of Transcript termination protein A18 from Camelus.